The sequence spans 488 residues: Malonate-semialdehyde dehydrogenase (488 aa).

7 residues coordinate NAD(+): alanine 150, phenylalanine 152, lysine 176, glutamate 179, arginine 180, serine 229, and threonine 251. Catalysis depends on cysteine 284, which acts as the Nucleophile. Glutamate 382 is an NAD(+) binding site.

Belongs to the aldehyde dehydrogenase family. IolA subfamily. In terms of assembly, homotetramer.

It catalyses the reaction 3-oxopropanoate + NAD(+) + CoA + H2O = hydrogencarbonate + acetyl-CoA + NADH + H(+). The catalysed reaction is 2-methyl-3-oxopropanoate + NAD(+) + CoA + H2O = propanoyl-CoA + hydrogencarbonate + NADH + H(+). It functions in the pathway polyol metabolism; myo-inositol degradation into acetyl-CoA; acetyl-CoA from myo-inositol: step 7/7. Its function is as follows. Catalyzes the oxidation of malonate semialdehyde (MSA) and methylmalonate semialdehyde (MMSA) into acetyl-CoA and propanoyl-CoA, respectively. Is involved in a myo-inositol catabolic pathway. Bicarbonate, and not CO2, is the end-product of the enzymatic reaction. The polypeptide is Malonate-semialdehyde dehydrogenase (Listeria innocua serovar 6a (strain ATCC BAA-680 / CLIP 11262)).